The sequence spans 398 residues: Queuine tRNA-ribosyltransferase (398 aa).

Catalysis depends on aspartate 102, which acts as the Proton acceptor. Substrate is bound by residues 102-106 (DSGGF), aspartate 156, glutamine 205, and glycine 232. Residues 263-269 (GVGTPED) form an RNA binding region. Catalysis depends on aspartate 282, which acts as the Nucleophile. The segment at 287-291 (TRNAR) is RNA binding; important for wobble base 34 recognition. Zn(2+) contacts are provided by cysteine 320, cysteine 322, cysteine 325, and histidine 362.

This sequence belongs to the queuine tRNA-ribosyltransferase family. As to quaternary structure, homodimer. Within each dimer, one monomer is responsible for RNA recognition and catalysis, while the other monomer binds to the replacement base PreQ1. Zn(2+) serves as cofactor.

It carries out the reaction 7-aminomethyl-7-carbaguanine + guanosine(34) in tRNA = 7-aminomethyl-7-carbaguanosine(34) in tRNA + guanine. It functions in the pathway tRNA modification; tRNA-queuosine biosynthesis. In terms of biological role, catalyzes the base-exchange of a guanine (G) residue with the queuine precursor 7-aminomethyl-7-deazaguanine (PreQ1) at position 34 (anticodon wobble position) in tRNAs with GU(N) anticodons (tRNA-Asp, -Asn, -His and -Tyr). Catalysis occurs through a double-displacement mechanism. The nucleophile active site attacks the C1' of nucleotide 34 to detach the guanine base from the RNA, forming a covalent enzyme-RNA intermediate. The proton acceptor active site deprotonates the incoming PreQ1, allowing a nucleophilic attack on the C1' of the ribose to form the product. After dissociation, two additional enzymatic reactions on the tRNA convert PreQ1 to queuine (Q), resulting in the hypermodified nucleoside queuosine (7-(((4,5-cis-dihydroxy-2-cyclopenten-1-yl)amino)methyl)-7-deazaguanosine). This is Queuine tRNA-ribosyltransferase from Polaromonas sp. (strain JS666 / ATCC BAA-500).